We begin with the raw amino-acid sequence, 543 residues long: Chaperonin GroEL (543 aa).

Residues 29–32 (TIGP), 86–90 (DGTTT), Gly-413, 478–480 (NAA), and Asp-494 contribute to the ATP site.

The protein belongs to the chaperonin (HSP60) family. As to quaternary structure, forms a cylinder of 14 subunits composed of two heptameric rings stacked back-to-back. Interacts with the co-chaperonin GroES.

The protein localises to the cytoplasm. It carries out the reaction ATP + H2O + a folded polypeptide = ADP + phosphate + an unfolded polypeptide.. Its function is as follows. Together with its co-chaperonin GroES, plays an essential role in assisting protein folding. The GroEL-GroES system forms a nano-cage that allows encapsulation of the non-native substrate proteins and provides a physical environment optimized to promote and accelerate protein folding. The polypeptide is Chaperonin GroEL (Limosilactobacillus fermentum (strain NBRC 3956 / LMG 18251) (Lactobacillus fermentum)).